The primary structure comprises 262 residues: Tropinone reductase homolog At2g30670 (262 aa).

Residue 13 to 37 participates in NADP(+) binding; it reads LVTGGASGIGHAIVEELAGLGARIY. S146 is a binding site for substrate. Y159 acts as the Proton acceptor in catalysis.

Belongs to the short-chain dehydrogenases/reductases (SDR) family. SDR65C subfamily.

In Arabidopsis thaliana (Mouse-ear cress), this protein is Tropinone reductase homolog At2g30670.